A 396-amino-acid polypeptide reads, in one-letter code: 1-deoxy-D-xylulose 5-phosphate reductoisomerase (396 aa).

NADPH-binding residues include Thr-13, Gly-14, Ser-15, Ile-16, and Asn-127. A 1-deoxy-D-xylulose 5-phosphate-binding site is contributed by Lys-128. An NADPH-binding site is contributed by Glu-129. A Mn(2+)-binding site is contributed by Asp-153. 1-deoxy-D-xylulose 5-phosphate-binding residues include Ser-154, Glu-155, Ser-184, and His-207. Mn(2+) is bound at residue Glu-155. Gly-213 serves as a coordination point for NADPH. 1-deoxy-D-xylulose 5-phosphate contacts are provided by Ser-220, Asn-225, Lys-226, and Glu-229. Glu-229 lines the Mn(2+) pocket.

It belongs to the DXR family. The cofactor is Mg(2+). Mn(2+) is required as a cofactor.

The enzyme catalyses 2-C-methyl-D-erythritol 4-phosphate + NADP(+) = 1-deoxy-D-xylulose 5-phosphate + NADPH + H(+). It functions in the pathway isoprenoid biosynthesis; isopentenyl diphosphate biosynthesis via DXP pathway; isopentenyl diphosphate from 1-deoxy-D-xylulose 5-phosphate: step 1/6. Its function is as follows. Catalyzes the NADPH-dependent rearrangement and reduction of 1-deoxy-D-xylulose-5-phosphate (DXP) to 2-C-methyl-D-erythritol 4-phosphate (MEP). The polypeptide is 1-deoxy-D-xylulose 5-phosphate reductoisomerase (Pseudomonas paraeruginosa (strain DSM 24068 / PA7) (Pseudomonas aeruginosa (strain PA7))).